The primary structure comprises 469 residues: Biotin synthase (469 aa).

One can recognise a Radical SAM core domain in the interval Met-51 to Arg-278. [4Fe-4S] cluster contacts are provided by Cys-66, Cys-70, and Cys-73. Cys-110, Cys-143, Cys-203, and Arg-273 together coordinate [2Fe-2S] cluster. The interval Ala-326–Ala-469 is disordered. Low complexity-rich tracts occupy residues Gly-363–Asp-384 and Ala-405–Ala-428.

It belongs to the radical SAM superfamily. Biotin synthase family. Homodimer. [4Fe-4S] cluster is required as a cofactor. [2Fe-2S] cluster serves as cofactor.

The enzyme catalyses (4R,5S)-dethiobiotin + (sulfur carrier)-SH + 2 reduced [2Fe-2S]-[ferredoxin] + 2 S-adenosyl-L-methionine = (sulfur carrier)-H + biotin + 2 5'-deoxyadenosine + 2 L-methionine + 2 oxidized [2Fe-2S]-[ferredoxin]. It participates in cofactor biosynthesis; biotin biosynthesis; biotin from 7,8-diaminononanoate: step 2/2. Its function is as follows. Catalyzes the conversion of dethiobiotin (DTB) to biotin by the insertion of a sulfur atom into dethiobiotin via a radical-based mechanism. The sequence is that of Biotin synthase from Kocuria rhizophila (strain ATCC 9341 / DSM 348 / NBRC 103217 / DC2201).